Here is a 346-residue protein sequence, read N- to C-terminus: D-alanine--D-alanine ligase (346 aa).

The ATP-grasp domain occupies 125-325 (KRIWRSEGLP…YPALCLEVLR (201 aa)). ATP is bound at residue 151 to 206 (FAALGSPMIVKPDREGSTIGLTKVTQIEQCGAAYALAARHDAMVLCEQFVKGDEVT). Positions 278, 292, and 294 each coordinate Mg(2+).

This sequence belongs to the D-alanine--D-alanine ligase family. Mg(2+) is required as a cofactor. It depends on Mn(2+) as a cofactor.

It localises to the cytoplasm. It catalyses the reaction 2 D-alanine + ATP = D-alanyl-D-alanine + ADP + phosphate + H(+). It participates in cell wall biogenesis; peptidoglycan biosynthesis. Cell wall formation. In Albidiferax ferrireducens (strain ATCC BAA-621 / DSM 15236 / T118) (Rhodoferax ferrireducens), this protein is D-alanine--D-alanine ligase.